Reading from the N-terminus, the 230-residue chain is Cytochrome c oxidase subunit 2 (230 aa).

The Mitochondrial intermembrane portion of the chain corresponds to Met1–Ser14. The chain crosses the membrane as a helical span at residues Pro15 to Met45. The Mitochondrial matrix portion of the chain corresponds to Val46 to Gln59. A helical membrane pass occupies residues Glu60–Met87. The Mitochondrial intermembrane portion of the chain corresponds to Asp88 to Ala230. The Cu cation site is built by His161, Cys196, Glu198, Cys200, His204, and Met207. Glu198 is a Mg(2+) binding site.

This sequence belongs to the cytochrome c oxidase subunit 2 family. As to quaternary structure, component of the cytochrome c oxidase (complex IV, CIV), a multisubunit enzyme composed of 14 subunits. The complex is composed of a catalytic core of 3 subunits MT-CO1, MT-CO2 and MT-CO3, encoded in the mitochondrial DNA, and 11 supernumerary subunits COX4I, COX5A, COX5B, COX6A, COX6B, COX6C, COX7A, COX7B, COX7C, COX8 and NDUFA4, which are encoded in the nuclear genome. The complex exists as a monomer or a dimer and forms supercomplexes (SCs) in the inner mitochondrial membrane with NADH-ubiquinone oxidoreductase (complex I, CI) and ubiquinol-cytochrome c oxidoreductase (cytochrome b-c1 complex, complex III, CIII), resulting in different assemblies (supercomplex SCI(1)III(2)IV(1) and megacomplex MCI(2)III(2)IV(2)). Found in a complex with TMEM177, COA6, COX18, COX20, SCO1 and SCO2. Interacts with TMEM177 in a COX20-dependent manner. Interacts with COX20. Interacts with COX16. Cu cation serves as cofactor.

The protein resides in the mitochondrion inner membrane. It carries out the reaction 4 Fe(II)-[cytochrome c] + O2 + 8 H(+)(in) = 4 Fe(III)-[cytochrome c] + 2 H2O + 4 H(+)(out). Its function is as follows. Component of the cytochrome c oxidase, the last enzyme in the mitochondrial electron transport chain which drives oxidative phosphorylation. The respiratory chain contains 3 multisubunit complexes succinate dehydrogenase (complex II, CII), ubiquinol-cytochrome c oxidoreductase (cytochrome b-c1 complex, complex III, CIII) and cytochrome c oxidase (complex IV, CIV), that cooperate to transfer electrons derived from NADH and succinate to molecular oxygen, creating an electrochemical gradient over the inner membrane that drives transmembrane transport and the ATP synthase. Cytochrome c oxidase is the component of the respiratory chain that catalyzes the reduction of oxygen to water. Electrons originating from reduced cytochrome c in the intermembrane space (IMS) are transferred via the dinuclear copper A center (CU(A)) of subunit 2 and heme A of subunit 1 to the active site in subunit 1, a binuclear center (BNC) formed by heme A3 and copper B (CU(B)). The BNC reduces molecular oxygen to 2 water molecules using 4 electrons from cytochrome c in the IMS and 4 protons from the mitochondrial matrix. The chain is Cytochrome c oxidase subunit 2 (mt-co2) from Danio rerio (Zebrafish).